The chain runs to 369 residues: Methylthioribose-1-phosphate isomerase (369 aa).

At Met1 the chain carries N-acetylmethionine. An Omega-N-methylarginine modification is found at Arg158. Asp248 functions as the Proton donor in the catalytic mechanism. Phosphoserine is present on Ser366.

It belongs to the eIF-2B alpha/beta/delta subunits family. MtnA subfamily.

It is found in the cytoplasm. It localises to the nucleus. It catalyses the reaction 5-(methylsulfanyl)-alpha-D-ribose 1-phosphate = 5-(methylsulfanyl)-D-ribulose 1-phosphate. It functions in the pathway amino-acid biosynthesis; L-methionine biosynthesis via salvage pathway; L-methionine from S-methyl-5-thio-alpha-D-ribose 1-phosphate: step 1/6. Catalyzes the interconversion of methylthioribose-1-phosphate (MTR-1-P) into methylthioribulose-1-phosphate (MTRu-1-P). In Mus musculus (Mouse), this protein is Methylthioribose-1-phosphate isomerase (Mri1).